We begin with the raw amino-acid sequence, 92 residues long: Small ribosomal subunit protein uS19 (92 aa).

Belongs to the universal ribosomal protein uS19 family.

Its function is as follows. Protein S19 forms a complex with S13 that binds strongly to the 16S ribosomal RNA. This chain is Small ribosomal subunit protein uS19, found in Rhodopseudomonas palustris (strain BisB18).